The sequence spans 647 residues: Threonine--tRNA ligase (647 aa).

The region spanning 1–63 (MDKINITFPD…EEDGSIEIVT (63 aa)) is the TGS domain. The catalytic stretch occupies residues 242–540 (DHRKIGKELD…LTEETKGAFP (299 aa)). Positions 336, 387, and 517 each coordinate Zn(2+).

The protein belongs to the class-II aminoacyl-tRNA synthetase family. Homodimer. Zn(2+) is required as a cofactor.

Its subcellular location is the cytoplasm. It catalyses the reaction tRNA(Thr) + L-threonine + ATP = L-threonyl-tRNA(Thr) + AMP + diphosphate + H(+). Functionally, catalyzes the attachment of threonine to tRNA(Thr) in a two-step reaction: L-threonine is first activated by ATP to form Thr-AMP and then transferred to the acceptor end of tRNA(Thr). Also edits incorrectly charged L-seryl-tRNA(Thr). This Staphylococcus carnosus (strain TM300) protein is Threonine--tRNA ligase.